The chain runs to 396 residues: Ribosomal RNA large subunit methyltransferase I (396 aa).

In terms of domain architecture, PUA spans 2–79 (AVRIKLKPGR…REEEIDREFF (78 aa)).

It belongs to the methyltransferase superfamily. RlmI family.

It is found in the cytoplasm. It catalyses the reaction cytidine(1962) in 23S rRNA + S-adenosyl-L-methionine = 5-methylcytidine(1962) in 23S rRNA + S-adenosyl-L-homocysteine + H(+). In terms of biological role, specifically methylates the cytosine at position 1962 (m5C1962) of 23S rRNA. In Shewanella sp. (strain ANA-3), this protein is Ribosomal RNA large subunit methyltransferase I.